Here is a 552-residue protein sequence, read N- to C-terminus: CTP synthase (552 aa).

Residues 1 to 270 form an amidoligase domain region; that stretch reads MTKFVFVTGG…DGLICDKLRL (270 aa). Position 13 (S13) interacts with CTP. S13 lines the UTP pocket. ATP-binding positions include 14–19 and D71; that span reads SLGKGI. Mg(2+)-binding residues include D71 and E144. Residues 151–153, 191–196, and K227 contribute to the CTP site; these read DIE and KTKPTQ. UTP-binding positions include 191 to 196 and K227; that span reads KTKPTQ. Positions 295–548 constitute a Glutamine amidotransferase type-1 domain; that stretch reads QIAMVGKYVE…IKAAVEHQKP (254 aa). G357 provides a ligand contact to L-glutamine. The active-site Nucleophile; for glutamine hydrolysis is the C384. Residues 385–388, E408, and R474 each bind L-glutamine; that span reads LGMQ. Active-site residues include H521 and E523.

The protein belongs to the CTP synthase family. In terms of assembly, homotetramer.

The enzyme catalyses UTP + L-glutamine + ATP + H2O = CTP + L-glutamate + ADP + phosphate + 2 H(+). It catalyses the reaction L-glutamine + H2O = L-glutamate + NH4(+). The catalysed reaction is UTP + NH4(+) + ATP = CTP + ADP + phosphate + 2 H(+). Its pathway is pyrimidine metabolism; CTP biosynthesis via de novo pathway; CTP from UDP: step 2/2. With respect to regulation, allosterically activated by GTP, when glutamine is the substrate; GTP has no effect on the reaction when ammonia is the substrate. The allosteric effector GTP functions by stabilizing the protein conformation that binds the tetrahedral intermediate(s) formed during glutamine hydrolysis. Inhibited by the product CTP, via allosteric rather than competitive inhibition. Catalyzes the ATP-dependent amination of UTP to CTP with either L-glutamine or ammonia as the source of nitrogen. Regulates intracellular CTP levels through interactions with the four ribonucleotide triphosphates. This is CTP synthase from Acidovorax ebreus (strain TPSY) (Diaphorobacter sp. (strain TPSY)).